We begin with the raw amino-acid sequence, 700 residues long: Protein kinase C, eye isozyme (700 aa).

2 consecutive Phorbol-ester/DAG-type zinc fingers follow at residues 71–121 (GHRF…VFKC) and 136–186 (KHGW…PPMC). A C2 domain is found at 189–310 (DISEVRGKLL…LQKEPVDGWY (122 aa)). Positions 222, 228, 281, 283, 286, and 289 each coordinate Ca(2+). A Protein kinase domain is found at 371 to 629 (FNFVKVIGKG…RQEITTHPFF (259 aa)). ATP is bound by residues 377-385 (IGKGSFGKV) and K400. The Proton acceptor role is filled by D495. The AGC-kinase C-terminal domain occupies 630 to 700 (RNVDWDKAEA…FMNPEFITII (71 aa)).

Belongs to the protein kinase superfamily. AGC Ser/Thr protein kinase family. PKC subfamily. Ca(2+) serves as cofactor. As to expression, exclusively expressed in photoreceptor cells.

The enzyme catalyses L-seryl-[protein] + ATP = O-phospho-L-seryl-[protein] + ADP + H(+). It carries out the reaction L-threonyl-[protein] + ATP = O-phospho-L-threonyl-[protein] + ADP + H(+). Its function is as follows. This is a calcium-activated, phospholipid-dependent, serine- and threonine-specific enzyme. This isozyme is a negative regulator of the visual transduction cascade and has been shown to be required for photoreceptor cell inactivation and light adaptation. Negative regulation is dependent on interaction with scaffolding protein inaD. Acts in a hh-signaling pathway which regulates the Duox-dependent gut immune response to bacterial uracil; required for the activation of Cad99C and consequently Cad99C-dependent endosome formation, which is essential for the Duox-dependent production of reactive oxygen species (ROS) in response to intestinal bacterial infection. The protein is Protein kinase C, eye isozyme (inaC) of Drosophila melanogaster (Fruit fly).